Here is a 249-residue protein sequence, read N- to C-terminus: ATP synthase subunit a (249 aa).

The next 6 membrane-spanning stretches (helical) occupy residues 26-46, 84-104, 114-134, 143-163, 185-205, and 208-228; these read FTNVSAFMVATVVLASGFLYL, FFPFVFSLFMFVLVANFIGLF, IIVTFALSLLVIGTVIFYGFF, LFVPSGVPGIIVPLVVLIEII, ITLKVFAGFVVSLSSLGALGI, and TVLPLLMTVAITALEFLVAFL.

This sequence belongs to the ATPase A chain family. As to quaternary structure, F-type ATPases have 2 components, CF(1) - the catalytic core - and CF(0) - the membrane proton channel. CF(1) has five subunits: alpha(3), beta(3), gamma(1), delta(1), epsilon(1). CF(0) has three main subunits: a(1), b(2) and c(9-12). The alpha and beta chains form an alternating ring which encloses part of the gamma chain. CF(1) is attached to CF(0) by a central stalk formed by the gamma and epsilon chains, while a peripheral stalk is formed by the delta and b chains.

It localises to the cell inner membrane. In terms of biological role, key component of the proton channel; it plays a direct role in the translocation of protons across the membrane. This is ATP synthase subunit a from Brucella ovis (strain ATCC 25840 / 63/290 / NCTC 10512).